We begin with the raw amino-acid sequence, 728 residues long: Nucleolar GTP-binding protein 2 (728 aa).

N-acetylmethionine is present on methionine 1. The interval 1–33 (MVKPKYKGRSTINRSAASTNPDRVQGAGGQNMR) is disordered. Over residues 10–22 (STINRSAASTNPD) the composition is skewed to polar residues. The CP-type G domain occupies 207–368 (WGELYKVIDS…LIDCPGVVYP (162 aa)). Residues 317–324 (GYPNVGKS) and 361–365 (DCPGV) each bind GTP. Disordered regions lie at residues 462–521 (PPNA…RNSE), 538–595 (VGPQ…DTKA), and 636–728 (YKEE…RQKQ). Low complexity predominate over residues 480 to 489 (EVPTETTQNN). Positions 498–520 (EVERSDSITEKEPEGDCSQDRNS) are enriched in basic and acidic residues. Serine 504 carries the phosphoserine modification. Residues 553–586 (SDLEDLESSGEEEEQEQEQPGEDAEEERSPDTQE) are compositionally biased toward acidic residues. Over residues 718-728 (KHRRNKFRQKQ) the composition is skewed to basic residues.

Belongs to the TRAFAC class YlqF/YawG GTPase family. NOG2 subfamily. As to quaternary structure, interacts with LYAR and RPL23A. Interacts with the nuclear importin-beta receptor and, at a lower extent, with importin-alpha.

It is found in the nucleus. Its subcellular location is the nucleolus. Functionally, GTPase that associates with pre-60S ribosomal subunits in the nucleolus and is required for their nuclear export and maturation. May promote cell proliferation possibly by increasing p53/TP53 protein levels, and consequently those of its downstream product CDKN1A/p21, and decreasing RPL23A protein levels. This Mus musculus (Mouse) protein is Nucleolar GTP-binding protein 2 (Gnl2).